The primary structure comprises 169 residues: Cell division inhibitor SulA (169 aa).

Residues 106 to 112 (ALRTGNY) form a ftsZ binding region. The interval 162 to 169 (KIHSNLYH) is lon protease binding.

It belongs to the SulA family. Interacts with FtsZ. Post-translationally, is rapidly cleaved and degraded by the Lon protease once DNA damage is repaired.

In terms of biological role, component of the SOS system and an inhibitor of cell division. Accumulation of SulA causes rapid cessation of cell division and the appearance of long, non-septate filaments. In the presence of GTP, binds a polymerization-competent form of FtsZ in a 1:1 ratio, thus inhibiting FtsZ polymerization and therefore preventing it from participating in the assembly of the Z ring. This mechanism prevents the premature segregation of damaged DNA to daughter cells during cell division. The polypeptide is Cell division inhibitor SulA (Escherichia fergusonii (strain ATCC 35469 / DSM 13698 / CCUG 18766 / IAM 14443 / JCM 21226 / LMG 7866 / NBRC 102419 / NCTC 12128 / CDC 0568-73)).